Here is a 62-residue protein sequence, read N- to C-terminus: UPF0291 protein CLK_1994 (62 aa).

The protein belongs to the UPF0291 family.

The protein localises to the cytoplasm. In Clostridium botulinum (strain Loch Maree / Type A3), this protein is UPF0291 protein CLK_1994.